The chain runs to 94 residues: uncharacterized protein (94 aa).

This is an uncharacterized protein from Archaeoglobus fulgidus (strain ATCC 49558 / DSM 4304 / JCM 9628 / NBRC 100126 / VC-16).